Reading from the N-terminus, the 103-residue chain is uncharacterized protein (103 aa).

Its subcellular location is the plastid. It is found in the chloroplast. This is an uncharacterized protein from Auxenochlorella pyrenoidosa (Freshwater green alga).